Here is a 355-residue protein sequence, read N- to C-terminus: Elongation factor Ts (355 aa).

The interval Thr-82–Val-85 is involved in Mg(2+) ion dislocation from EF-Tu.

This sequence belongs to the EF-Ts family.

It localises to the cytoplasm. Its function is as follows. Associates with the EF-Tu.GDP complex and induces the exchange of GDP to GTP. It remains bound to the aminoacyl-tRNA.EF-Tu.GTP complex up to the GTP hydrolysis stage on the ribosome. This is Elongation factor Ts from Helicobacter hepaticus (strain ATCC 51449 / 3B1).